Here is a 219-residue protein sequence, read N- to C-terminus: Small ribosomal subunit protein uS3c (219 aa).

The KH type-2 domain occupies 47–118; the sequence is IKKNIRISSG…KINIAITRIT (72 aa).

Belongs to the universal ribosomal protein uS3 family. Part of the 30S ribosomal subunit.

It localises to the plastid. It is found in the chloroplast. The chain is Small ribosomal subunit protein uS3c (rps3) from Citrus sinensis (Sweet orange).